The sequence spans 144 residues: Large ribosomal subunit protein uL15 (144 aa).

Residues 1–56 (MELNTLAPAPGAKSSKKRVGRGIGSGLGKTGGRGHKGQKSRSGGSVKPGFEGGQMP) are disordered. Residues 21-31 (RGIGSGLGKTG) are compositionally biased toward gly residues.

Belongs to the universal ribosomal protein uL15 family. Part of the 50S ribosomal subunit.

In terms of biological role, binds to the 23S rRNA. The chain is Large ribosomal subunit protein uL15 from Idiomarina loihiensis (strain ATCC BAA-735 / DSM 15497 / L2-TR).